A 184-amino-acid polypeptide reads, in one-letter code: dTTP/UTP pyrophosphatase (184 aa).

Asp67 functions as the Proton acceptor in the catalytic mechanism.

The protein belongs to the Maf family. YhdE subfamily. A divalent metal cation serves as cofactor.

The protein localises to the cytoplasm. It carries out the reaction dTTP + H2O = dTMP + diphosphate + H(+). The catalysed reaction is UTP + H2O = UMP + diphosphate + H(+). In terms of biological role, nucleoside triphosphate pyrophosphatase that hydrolyzes dTTP and UTP. May have a dual role in cell division arrest and in preventing the incorporation of modified nucleotides into cellular nucleic acids. The polypeptide is dTTP/UTP pyrophosphatase (Elusimicrobium minutum (strain Pei191)).